A 185-amino-acid polypeptide reads, in one-letter code: uncharacterized protein (185 aa).

2 helical membrane passes run 1-21 and 111-131; these read MMKFLLILIFLASFSFSLTPE and FLWIITGIFTTLTASVIAFAW.

The protein to A.aeolicus aq_1900.

It localises to the cell membrane. This is an uncharacterized protein from Aquifex aeolicus (strain VF5).